Here is a 1904-residue protein sequence, read N- to C-terminus: Pericentriolar material 1 protein (1904 aa).

Disordered regions lie at residues 1–135, 159–179, 265–303, 338–361, 376–407, 430–489, and 520–559; these read MATG…SGEP, QEDGRGEPTMDSSQARDPQQE, HDSQTQSVPDNRRQAESLSLTREISQSRNSSVSEHQSDE, NSSFFPASSSPQRSIDQRSTTSAA, NSLASAPYPPDSLASQNESEEDDNLNPTEKLQ, SDMM…GTNN, and CHNREDDKHADLPHGEDDEVEEDRASEDSMSSHRSSLGDV. Positions 43–60 are enriched in basic and acidic residues; sequence RSSEKNKKKLGGEAETRL. Residues 107 to 118 show a composition bias toward polar residues; that stretch reads INFSDLDQINTN. Positions 171-212 form a coiled coil; the sequence is SQARDPQQEAKEELENLKKQHDLLKRMLQQQEQLKALQGRQA. Residues 280 to 298 are compositionally biased toward polar residues; that stretch reads ESLSLTREISQSRNSSVSE. Positions 301 to 334 form a coiled coil; it reads SDEKAQLFNKMRMLQGKKQKMDKLLGELHTLRDQ. Residues 338–348 are compositionally biased toward low complexity; that stretch reads NSSFFPASSSP. Residues 349–361 are compositionally biased toward polar residues; the sequence is QRSIDQRSTTSAA. Residues 403–429 are a coiled coil; sequence TEKLQKLNEVRKRLNELRELVHYYEQT. Residues 442–452 show a composition bias toward acidic residues; that stretch reads KEEEETEDSGS. Over residues 461–470 the composition is skewed to polar residues; that stretch reads PVTNIRNPQG. The span at 471 to 482 shows a compositional bias: low complexity; the sequence is ISSWSEINSNSN. The span at 520–534 shows a compositional bias: basic and acidic residues; sequence CHNREDDKHADLPHG. The segment covering 535–544 has biased composition (acidic residues); sequence EDDEVEEDRA. Coiled coils occupy residues 562-592 and 636-686; these read DAEFEQKINRLMAAKQKLRQLQNLAAMVQDD and LNEK…LQSA. A disordered region spans residues 686–706; sequence AGLGNSPANRQTSPATSTPAM. Residues 687–706 are compositionally biased toward polar residues; it reads GLGNSPANRQTSPATSTPAM. Residues 731–768 are a coiled coil; it reads SEMRRHEILREELRRRRKQLEALMAEHQRRRELAETIS. Positions 773 to 840 are disordered; sequence SVKSEGSEAQ…PSMNDSFSAY (68 aa). A compositionally biased stretch (polar residues) spans 779-804; it reads SEAQRTPQQSRTENRTMATWGGSTQC. A compositionally biased stretch (acidic residues) spans 806 to 830; the sequence is LDEEDGDEDGYLSDGLDQAEEEEDA. Coiled-coil stretches lie at residues 895-927 and 970-1000; these read SELSYVEEKEQWQEQINQLKKQLEFSVSICQTL and TQLSWQQNNVQRLKQMLNDLMHQQEQQCQEK. 3 disordered regions span residues 991–1018, 1063–1082, and 1088–1225; these read HQQEQQCQEKPSRKERGSSAPPPPSPVF, GFPQSSEQQQHPLDHNASGK, and FPKP…TGYD. Composition is skewed to polar residues over residues 1064–1073 and 1093–1102; these read FPQSSEQQQH and ESSSSTGAEN. Residues 1103–1117 are compositionally biased toward basic and acidic residues; that stretch reads QRSHRQPEDEVEKRS. Positions 1141–1150 are enriched in polar residues; the sequence is SVQSIASGHK. Basic and acidic residues predominate over residues 1151 to 1162; the sequence is NQSDTSRRRNFD. Over residues 1173–1182 the composition is skewed to low complexity; sequence PDPVDPTTVT. The stretch at 1421–1447 forms a coiled coil; the sequence is IHLDQALARMREYERMKIEAESTLDSE. Basic and acidic residues predominate over residues 1616–1625; the sequence is AKEDKDETET. 3 disordered regions span residues 1616 to 1741, 1774 to 1838, and 1865 to 1904; these read AKED…VKGE, MKTE…SDED, and EAQTNSLSDELLGGGGEQDRELVGDAQTLKEPETFGAQSA. Positions 1649-1658 are enriched in acidic residues; it reads SDQEEDEESE. Residues 1668-1678 show a composition bias toward polar residues; sequence KAETQALTNYG. Residues 1680–1695 are compositionally biased toward acidic residues; sequence GEDENEDEEIEFEEGP. Polar residues-rich tracts occupy residues 1698–1720, 1728–1737, and 1779–1791; these read VQTSLQASSETATENEQISSQEL, ILSSEQQSVN, and SSSSLPGNETQML. Residues 1800–1812 show a composition bias toward low complexity; it reads SSAGSSESSMAGS. Positions 1881–1897 are enriched in basic and acidic residues; the sequence is EQDRELVGDAQTLKEPE.

Belongs to the PCM1 family. Self-associates.

It is found in the cytoplasm. The protein resides in the cytoskeleton. It localises to the microtubule organizing center. The protein localises to the centrosome. Its subcellular location is the cytoplasmic granule. It is found in the centriolar satellite. The protein resides in the cilium basal body. Required for centrosome assembly and function. Essential for the correct localization of several centrosomal proteins including CETN3 and PCNT. Required to anchor microtubules to the centrosome. Probably involved in the biogenesis of cilia. The polypeptide is Pericentriolar material 1 protein (PCM1) (Gallus gallus (Chicken)).